A 113-amino-acid polypeptide reads, in one-letter code: Sensorin-A (113 aa).

The first 32 residues, 1–32 (MPSRAATSPLNVQMMVVLCIVCLALQAVAANA), serve as a signal peptide directing secretion. At Phe-54 the chain carries Phenylalanine amide. Positions 58-113 (SSSETYSTNLINLLSRQLVSQEELRAILEKQPILLDEVVKILDRNDDGYITVADLL) are excised as a propeptide. The region spanning 87-113 (KQPILLDEVVKILDRNDDGYITVADLL) is the EF-hand domain. Residues Asp-100, Asn-102, Asp-104, Tyr-106, and Asp-111 each contribute to the Ca(2+) site.

As to expression, seems to be specific to the mechanosensory neurons of the central nervous system.

Its subcellular location is the secreted. May function as an inhibitory cotransmitter acting in conjunction with the fast excitatory transmitter released by sensory neurons. The peptide selectively inhibits certain postsynaptic cells probably by means of sensorin A release. This chain is Sensorin-A (PSC1), found in Aplysia californica (California sea hare).